Consider the following 233-residue polypeptide: Synaptogyrin-4 (233 aa).

Residues 18–169 (FLRRPKSISR…QAYLAFQDLR (152 aa)) form the MARVEL domain. The next 4 membrane-spanning stretches (helical) occupy residues 25–45 (ISRI…LTDG), 66–86 (CSFA…FLAI), 104–124 (LLDF…FCFL), and 145–165 (AAIA…YLAF). The interval 191 to 233 (SPSSTSPSNPPITGPNSLSYTSSALSPYMTTPKAPRLAMMPDS) is disordered. Over residues 204–219 (GPNSLSYTSSALSPYM) the composition is skewed to polar residues.

It belongs to the synaptogyrin family.

The protein resides in the membrane. The polypeptide is Synaptogyrin-4 (Syngr4) (Mus musculus (Mouse)).